Here is a 142-residue protein sequence, read N- to C-terminus: Augurin-A (142 aa).

A signal peptide spans 1–28 (MLSEKFHLRLLTLLTLLTALSLTDVASE). 2 propeptides span residues 29 to 66 (SKLE…LKRP) and 127 to 142 (GAAS…YDYY).

Belongs to the augurin family.

It localises to the secreted. The protein localises to the cytoplasm. It is found in the apical cell membrane. Functionally, probable hormone. Required for the proper formation of the central nervous system by attenuating cell proliferation during development. This chain is Augurin-A, found in Danio rerio (Zebrafish).